Consider the following 532-residue polypeptide: NADH-quinone oxidoreductase subunit N 2 (532 aa).

The next 14 helical transmembrane spans lie at 37-57, 63-83, 107-127, 133-153, 158-178, 192-212, 241-261, 276-296, 302-322, 336-356, 367-387, 411-431, 444-464, and 504-524; these read VAPP…DLFL, RLLG…LIPL, FTLV…LLSL, LPAG…ALLP, LATL…LVGI, FFLS…FVYA, VALT…HFWV, LSVV…VVAF, VWGP…NVAA, LLAW…AAAA, VAYA…AAVV, LALG…IGLF, GLGW…YYYL, and TAIV…QTVL.

The protein belongs to the complex I subunit 2 family. As to quaternary structure, NDH-1 is composed of 14 different subunits. Subunits NuoA, H, J, K, L, M, N constitute the membrane sector of the complex.

The protein localises to the cell membrane. It carries out the reaction a quinone + NADH + 5 H(+)(in) = a quinol + NAD(+) + 4 H(+)(out). NDH-1 shuttles electrons from NADH, via FMN and iron-sulfur (Fe-S) centers, to quinones in the respiratory chain. The immediate electron acceptor for the enzyme in this species is believed to be a menaquinone. Couples the redox reaction to proton translocation (for every two electrons transferred, four hydrogen ions are translocated across the cytoplasmic membrane), and thus conserves the redox energy in a proton gradient. The polypeptide is NADH-quinone oxidoreductase subunit N 2 (Streptomyces griseus subsp. griseus (strain JCM 4626 / CBS 651.72 / NBRC 13350 / KCC S-0626 / ISP 5235)).